Reading from the N-terminus, the 78-residue chain is TP53-regulated inhibitor of apoptosis 1-A (78 aa).

A coiled-coil region spans residues 1 to 52 (MNSVGEECTDMKRDYDQCFNRWFAEKFLKGAGSGDPCTELFRRYRECVQKAI). The CHCH domain maps to 5–55 (GEECTDMKRDYDQCFNRWFAEKFLKGAGSGDPCTELFRRYRECVQKAIKDK). 2 short sequence motifs (cx9C motif) span residues 8 to 18 (CTDMKRDYDQC) and 37 to 47 (CTELFRRYREC). Intrachain disulfides connect C8/C47 and C18/C37.

Belongs to the TRIAP1/MDM35 family. In terms of assembly, monomer. Forms a complex with prelid1 in the mitochondrion intermembrane space. Interacts with prelid3a.

The protein localises to the mitochondrion. Its subcellular location is the mitochondrion intermembrane space. It carries out the reaction a 1,2-diacyl-sn-glycero-3-phosphate(in) = a 1,2-diacyl-sn-glycero-3-phosphate(out). Involved in the modulation of the mitochondrial apoptotic pathway by ensuring the accumulation of cardiolipin (CL) in mitochondrial membranes. The triap1:prelid1 complex probably functions as a phosphatidic acid (PA) transporter across the mitochondrion intermembrane space to provide PA for cardiolipin CL synthesis in the inner membrane. Likewise, the triap1:prelid3a complex mediates the transfer of phosphatidic acid (PA) between liposomes (in vitro) and probably functions as a PA transporter across the mitochondrion intermembrane space (in vivo). Mediates cell survival by inhibiting activation of caspase-9 which prevents induction of apoptosis. Required for pronephros development; probably involved at an early stage in the formation of pronephric components derived from the somatic layer. The protein is TP53-regulated inhibitor of apoptosis 1-A (triap1-a) of Xenopus laevis (African clawed frog).